The chain runs to 104 residues: N(4)-acetylcytidine amidohydrolase (104 aa).

The ASCH domain occupies 7–93; it reads MTFFSRFEAD…EVIQEIYPGI (87 aa). K22 functions as the Proton acceptor in the catalytic mechanism. Catalysis depends on T25, which acts as the Nucleophile. E75 serves as the catalytic Proton donor.

The protein belongs to the N(4)-acetylcytidine amidohydrolase family.

It carries out the reaction N(4)-acetylcytidine + H2O = cytidine + acetate + H(+). It catalyses the reaction N(4)-acetyl-2'-deoxycytidine + H2O = 2'-deoxycytidine + acetate + H(+). The enzyme catalyses N(4)-acetylcytosine + H2O = cytosine + acetate + H(+). Its function is as follows. Catalyzes the hydrolysis of N(4)-acetylcytidine (ac4C). In Vibrio vulnificus (strain CMCP6), this protein is N(4)-acetylcytidine amidohydrolase.